Consider the following 286-residue polypeptide: Probable xyloglucan endotransglucosylase/hydrolase protein 23 (286 aa).

The first 24 residues, 1 to 24 (MAMISYSTIVVALLASFMICSVSA), serve as a signal peptide directing secretion. The GH16 domain occupies 25–214 (NFQRDVEITW…WSKAPFTASY (190 aa)). Glu100 serves as the catalytic Nucleophile. The active-site Proton donor is Glu104. Residue Glu104 coordinates xyloglucan. Asn108 carries N-linked (GlcNAc...) asparagine glycosylation. Residues 117–119 (HTN), 127–129 (DRE), 193–194 (EW), and Gly198 contribute to the xyloglucan site. Cys222 and Cys231 are joined by a disulfide. An N-linked (GlcNAc...) asparagine glycan is attached at Asn233. Cys269 and Cys283 are disulfide-bonded. Arg274 is a binding site for xyloglucan.

Belongs to the glycosyl hydrolase 16 family. XTH group 2 subfamily. Contains at least one intrachain disulfide bond essential for its enzymatic activity.

The protein localises to the secreted. The protein resides in the cell wall. It is found in the extracellular space. Its subcellular location is the apoplast. The enzyme catalyses breaks a beta-(1-&gt;4) bond in the backbone of a xyloglucan and transfers the xyloglucanyl segment on to O-4 of the non-reducing terminal glucose residue of an acceptor, which can be a xyloglucan or an oligosaccharide of xyloglucan.. Catalyzes xyloglucan endohydrolysis (XEH) and/or endotransglycosylation (XET). Cleaves and religates xyloglucan polymers, an essential constituent of the primary cell wall, and thereby participates in cell wall construction of growing tissues. The chain is Probable xyloglucan endotransglucosylase/hydrolase protein 23 (XTH23) from Arabidopsis thaliana (Mouse-ear cress).